A 188-amino-acid polypeptide reads, in one-letter code: Ion-translocating oxidoreductase complex subunit G (188 aa).

The Cytoplasmic segment spans residues 1–9; sequence MSDSKEITK. Residues 10 to 30 traverse the membrane as a helical segment; that stretch reads VIVTMVVISAVAAALLALTYT. Residues 31-188 lie on the Extracellular side of the membrane; it reads PTQAQLKLLQ…AVDYVSAQEG (158 aa). Position 166 is an FMN phosphoryl threonine (threonine 166).

Belongs to the RnfG family. As to quaternary structure, the Rnf complex is probably composed of eight subunits, including RnfA, RnfB, RnfC, RnfD, RnfE and RnfG. FMN is required as a cofactor.

The protein localises to the cell membrane. Part of a membrane-bound complex that couples electron transfer with translocation of ions across the membrane. Catalyzes Na(+) transport, most probably coupled to electron transfer from reduced ferredoxin to methanophenazine and heterodisulfide reductase. Involved in heterodisulfide reduction during methanogenesis from acetate. In Methanosarcina acetivorans (strain ATCC 35395 / DSM 2834 / JCM 12185 / C2A), this protein is Ion-translocating oxidoreductase complex subunit G.